A 152-amino-acid chain; its full sequence is Proteolipid protein 2 (152 aa).

Asn18 is a glycosylation site (N-linked (GlcNAc...) asparagine). Residues Phe19–Gln137 enclose the MARVEL domain. The next 3 membrane-spanning stretches (helical) occupy residues Gly25–Ser45, Gly48–Met68, and Phe85–Glu105. An N-linked (GlcNAc...) asparagine glycan is attached at Asn108. Residues Ile112–Thr132 form a helical membrane-spanning segment.

In terms of tissue distribution, enriched in colonic mucosa. The expression of A4 follows a gradient along the crypto-villus axis with the most abundant message occurring in the lower half of the crypt.

The protein resides in the membrane. May play a role in cell differentiation in the intestinal epithelium. The polypeptide is Proteolipid protein 2 (PLP2) (Homo sapiens (Human)).